Reading from the N-terminus, the 295-residue chain is 4-hydroxy-tetrahydrodipicolinate synthase (295 aa).

Thr-47 is a binding site for pyruvate. Residue Tyr-135 is the Proton donor/acceptor of the active site. Residue Lys-163 is the Schiff-base intermediate with substrate of the active site. Ile-204 contributes to the pyruvate binding site.

This sequence belongs to the DapA family. Homotetramer; dimer of dimers.

The protein localises to the cytoplasm. The enzyme catalyses L-aspartate 4-semialdehyde + pyruvate = (2S,4S)-4-hydroxy-2,3,4,5-tetrahydrodipicolinate + H2O + H(+). It functions in the pathway amino-acid biosynthesis; L-lysine biosynthesis via DAP pathway; (S)-tetrahydrodipicolinate from L-aspartate: step 3/4. Catalyzes the condensation of (S)-aspartate-beta-semialdehyde [(S)-ASA] and pyruvate to 4-hydroxy-tetrahydrodipicolinate (HTPA). The sequence is that of 4-hydroxy-tetrahydrodipicolinate synthase from Caldicellulosiruptor saccharolyticus (strain ATCC 43494 / DSM 8903 / Tp8T 6331).